Reading from the N-terminus, the 123-residue chain is Ribosome-binding factor A (123 aa).

It belongs to the RbfA family. In terms of assembly, monomer. Binds 30S ribosomal subunits, but not 50S ribosomal subunits or 70S ribosomes.

The protein localises to the cytoplasm. In terms of biological role, one of several proteins that assist in the late maturation steps of the functional core of the 30S ribosomal subunit. Associates with free 30S ribosomal subunits (but not with 30S subunits that are part of 70S ribosomes or polysomes). Required for efficient processing of 16S rRNA. May interact with the 5'-terminal helix region of 16S rRNA. This is Ribosome-binding factor A from Chlamydia trachomatis serovar L2 (strain ATCC VR-902B / DSM 19102 / 434/Bu).